The sequence spans 143 residues: MELNTIQPADGAKHYKRRVGRGIGSGLGKTAGRGHKGQKSRSGGFHKVGFEGGQMPLQRRLPKRGFKSLATPYKAEVRLSDLEALPVTEIDILALKQAGVIGELARVVRVILSGELTKKVTLKGLIATKGAKAAIEAAGGSVA.

The tract at residues 1-52 is disordered; sequence MELNTIQPADGAKHYKRRVGRGIGSGLGKTAGRGHKGQKSRSGGFHKVGFEG. A compositionally biased stretch (gly residues) spans 21–31; sequence RGIGSGLGKTA.

It belongs to the universal ribosomal protein uL15 family. Part of the 50S ribosomal subunit.

In terms of biological role, binds to the 23S rRNA. The polypeptide is Large ribosomal subunit protein uL15 (Herminiimonas arsenicoxydans).